A 524-amino-acid polypeptide reads, in one-letter code: Keratin, type II cytoskeletal 72 (524 aa).

The head stretch occupies residues 1–136 (MSRQLNLYPG…DPEIQKVRAQ (136 aa)). The tract at residues 137–172 (EREQIKALNNKFASFIDKVRFLEQQNQVLGTKWELL) is coil 1A. An IF rod domain is found at 137–450 (EREQIKALNN…KLLEGEECRM (314 aa)). Positions 173–191 (QQLDLNNCKNNLEPILEGY) are linker 1. The coil 1B stretch occupies residues 192–283 (TSNLRKQLEM…CLYEGEIAQL (92 aa)). Positions 284 to 307 (QSHISDTSVILSMDNNRDLDLDSI) are linker 12. The interval 308–446 (IAQVRAQYEE…ATYRKLLEGE (139 aa)) is coil 2. The segment at 447–524 (ECRMSGEYPN…SSCATKKASR (78 aa)) is tail. The segment at 495-524 (KTKGSCGGSELKDAPAKTSGSSCATKKASR) is disordered.

It belongs to the intermediate filament family. As to quaternary structure, heterotetramer of two type I and two type II keratins.

Has a role in hair formation. Specific component of keratin intermediate filaments in the inner root sheath (IRS) of the hair follicle. This is Keratin, type II cytoskeletal 72 (KRT72) from Bos taurus (Bovine).